A 417-amino-acid polypeptide reads, in one-letter code: Gamma-glutamyl phosphate reductase (417 aa).

This sequence belongs to the gamma-glutamyl phosphate reductase family.

The protein localises to the cytoplasm. The enzyme catalyses L-glutamate 5-semialdehyde + phosphate + NADP(+) = L-glutamyl 5-phosphate + NADPH + H(+). It participates in amino-acid biosynthesis; L-proline biosynthesis; L-glutamate 5-semialdehyde from L-glutamate: step 2/2. Catalyzes the NADPH-dependent reduction of L-glutamate 5-phosphate into L-glutamate 5-semialdehyde and phosphate. The product spontaneously undergoes cyclization to form 1-pyrroline-5-carboxylate. This chain is Gamma-glutamyl phosphate reductase, found in Escherichia coli O127:H6 (strain E2348/69 / EPEC).